A 165-amino-acid chain; its full sequence is Large ribosomal subunit protein uL10 (165 aa).

Belongs to the universal ribosomal protein uL10 family. In terms of assembly, part of the ribosomal stalk of the 50S ribosomal subunit. The N-terminus interacts with L11 and the large rRNA to form the base of the stalk. The C-terminus forms an elongated spine to which L12 dimers bind in a sequential fashion forming a multimeric L10(L12)X complex.

Forms part of the ribosomal stalk, playing a central role in the interaction of the ribosome with GTP-bound translation factors. The sequence is that of Large ribosomal subunit protein uL10 from Dechloromonas aromatica (strain RCB).